We begin with the raw amino-acid sequence, 807 residues long: cAMP-regulated phosphoprotein 21 (807 aa).

Positions 1 to 127 (MSEQGGLTPT…KNREKLSERP (127 aa)) are disordered. N-acetylserine is present on Ser2. At Ser32 the chain carries Phosphoserine. Residues 32-57 (SLDEEEKLELQRRLAAQNQERRKSKS) are a coiled coil. Ser55 bears the Phosphoserine; by PKA mark. A compositionally biased stretch (polar residues) spans 89–98 (IHLQLSSFPS). Over residues 101 to 127 (EEDKSRKDDSEREKEKDKNREKLSERP) the composition is skewed to basic and acidic residues. Ser133 bears the Phosphoserine mark. Positions 163-226 (RMILLKMEQE…SVIINKTSST (64 aa)) constitute an R3H domain. Positions 227–298 (RIPEQRFCEH…VRERIFAHDS (72 aa)) constitute an SUZ domain. The tract at residues 245–282 (SQKRFILKRDNSSIDKEDNQNRMHPFRDDRRSKSIEER) is disordered. Residues Asn265 and Ser298 each carry the phosphoserine modification. 4 disordered regions span residues 328–434 (LFRA…TSSV), 474–536 (GSIL…QPQM), 552–576 (SQLSMSRQSSGDTPEPPSGTVYPAS), and 595–627 (QLSTGGFSDSGPPISQQVLQAPPSPQGFVQQPP). Positions 337 to 348 (GRTSGSRQSSSE) are enriched in low complexity. A compositionally biased stretch (basic and acidic residues) spans 349 to 358 (TELRWPDHQR). Residues 359–380 (AWSSTDSDSSNRNLKPTMTKTA) are compositionally biased toward polar residues. Phosphoserine occurs at positions 361 and 381. The segment covering 401–421 (GKLSKTGSESSSSAGSSGSLS) has biased composition (low complexity). The span at 422–434 (RTHPQSTALTSSV) shows a compositional bias: polar residues. A compositionally biased stretch (pro residues) spans 514–524 (QQPPQQQPSPQ). Residues 525-535 (PQQQVQASQPQ) are compositionally biased toward low complexity. 2 stretches are compositionally biased toward polar residues: residues 552 to 563 (SQLSMSRQSSGD) and 595 to 613 (QLSTGGFSDSGPPISQQVL). A Phosphoserine modification is found at Ser557. Arg650 is subject to Asymmetric dimethylarginine.

As to quaternary structure, interacts with CALM1. Phosphorylation of isoform 2 at Ser-55 is enhanced upon dopamine D1 receptor activation and favors interaction with CALM1. Post-translationally, methylated by CARM1 at Arg-650 in immature thymocytes. In terms of tissue distribution, present at high levels in thymus and low levels in brain. In thymus, isoform 1 is specifically found in immature thymocytes (at protein level).

The protein localises to the cytoplasm. May act as a competitive inhibitor of calmodulin-dependent enzymes such as calcineurin in neurons. This is cAMP-regulated phosphoprotein 21 (Arpp21) from Mus musculus (Mouse).